Reading from the N-terminus, the 160-residue chain is SsrA-binding protein (160 aa).

It belongs to the SmpB family.

Its subcellular location is the cytoplasm. Functionally, required for rescue of stalled ribosomes mediated by trans-translation. Binds to transfer-messenger RNA (tmRNA), required for stable association of tmRNA with ribosomes. tmRNA and SmpB together mimic tRNA shape, replacing the anticodon stem-loop with SmpB. tmRNA is encoded by the ssrA gene; the 2 termini fold to resemble tRNA(Ala) and it encodes a 'tag peptide', a short internal open reading frame. During trans-translation Ala-aminoacylated tmRNA acts like a tRNA, entering the A-site of stalled ribosomes, displacing the stalled mRNA. The ribosome then switches to translate the ORF on the tmRNA; the nascent peptide is terminated with the 'tag peptide' encoded by the tmRNA and targeted for degradation. The ribosome is freed to recommence translation, which seems to be the essential function of trans-translation. The sequence is that of SsrA-binding protein from Yersinia pseudotuberculosis serotype O:1b (strain IP 31758).